Here is an 87-residue protein sequence, read N- to C-terminus: uncharacterized protein (87 aa).

The helical transmembrane segment at 29–49 (ILWMIIFVVIIAVIIYILISP) threads the bilayer.

The protein localises to the membrane. This is an uncharacterized protein from Methanocaldococcus jannaschii (strain ATCC 43067 / DSM 2661 / JAL-1 / JCM 10045 / NBRC 100440) (Methanococcus jannaschii).